The sequence spans 89 residues: Small ribosomal subunit protein uS15 (89 aa).

Belongs to the universal ribosomal protein uS15 family. As to quaternary structure, part of the 30S ribosomal subunit. Forms a bridge to the 50S subunit in the 70S ribosome, contacting the 23S rRNA.

Its function is as follows. One of the primary rRNA binding proteins, it binds directly to 16S rRNA where it helps nucleate assembly of the platform of the 30S subunit by binding and bridging several RNA helices of the 16S rRNA. Forms an intersubunit bridge (bridge B4) with the 23S rRNA of the 50S subunit in the ribosome. The protein is Small ribosomal subunit protein uS15 of Corynebacterium aurimucosum (strain ATCC 700975 / DSM 44827 / CIP 107346 / CN-1) (Corynebacterium nigricans).